Consider the following 316-residue polypeptide: Lys-63-specific deubiquitinase BRCC36 (316 aa).

Alanine 2 bears the N-acetylalanine mark. The region spanning 12–179 (VHLESDAFLV…YTCFQSIQAQ (168 aa)) is the MPN domain. The Zn(2+) site is built by histidine 122, histidine 124, and aspartate 135. Residues 122–135 (HSHPHITVWPSHVD) carry the JAMM motif motif. At serine 258 the chain carries Phosphoserine.

It belongs to the peptidase M67A family. BRCC36 subfamily. As to quaternary structure, component of the ARISC complex, at least composed of UIMC1/RAP80, ABRAXAS1, BRCC3/BRCC36, BABAM2 and BABAM1/NBA1. Component of the BRCA1-A complex, at least composed of BRCA1, BARD1, UIMC1/RAP80, ABRAXAS1, BRCC3/BRCC36, BABAM2 and BABAM1/NBA1. In the BRCA1-A complex, interacts directly with ABRAXAS1 and BABAM2. Component of the BRISC complex, at least composed of ABRAXAS2, BRCC3/BRCC36, BABAM2 and BABAM1/NBA1. Identified in a complex with SHMT2 and the other subunits of the BRISC complex. In the BRISC complex, interacts directly with ABRAXAS2. Identified in a complex with ABRAXAS2 and NUMA1. The BRISC complex interacts with the CSN complex. Component of the BRCA1/BRCA2 containing complex (BRCC), which also contains BRCA1, BRCA2, BARD1, BABAM2 and RAD51. BRCC is a ubiquitin E3 ligase complex that enhances cellular survival following DNA damage. Interacts with BRCA1. Binds polyubiquitin. Interacts with PWWP2B. Interacts with HDAC1; this interaction is enhanced in the presence of PWWP2B. Zn(2+) serves as cofactor.

Its subcellular location is the nucleus. The protein localises to the cytoplasm. The protein resides in the cytoskeleton. It is found in the spindle pole. Its function is as follows. Metalloprotease that specifically cleaves 'Lys-63'-linked polyubiquitin chains. Does not have activity toward 'Lys-48'-linked polyubiquitin chains. Component of the BRCA1-A complex, a complex that specifically recognizes 'Lys-63'-linked ubiquitinated histones H2A and H2AX at DNA lesions sites, leading to target the BRCA1-BARD1 heterodimer to sites of DNA damage at double-strand breaks (DSBs). In the BRCA1-A complex, it specifically removes 'Lys-63'-linked ubiquitin on histones H2A and H2AX, antagonizing the RNF8-dependent ubiquitination at double-strand breaks (DSBs). Catalytic subunit of the BRISC complex, a multiprotein complex that specifically cleaves 'Lys-63'-linked ubiquitin in various substrates. Mediates the specific 'Lys-63'-specific deubiquitination associated with the COP9 signalosome complex (CSN), via the interaction of the BRISC complex with the CSN complex. The BRISC complex is required for normal mitotic spindle assembly and microtubule attachment to kinetochores via its role in deubiquitinating NUMA1. Plays a role in interferon signaling via its role in the deubiquitination of the interferon receptor IFNAR1; deubiquitination increases IFNAR1 activity by enhancing its stability and cell surface expression. Acts as a regulator of the NLRP3 inflammasome by mediating deubiquitination of NLRP3, leading to NLRP3 inflammasome assembly. Down-regulates the response to bacterial lipopolysaccharide (LPS) via its role in IFNAR1 deubiquitination. Deubiquitinates HDAC1 and PWWP2B leading to their stabilization. In Bos taurus (Bovine), this protein is Lys-63-specific deubiquitinase BRCC36 (BRCC3).